The chain runs to 737 residues: Transcription activator MSS11 (737 aa).

The tract at residues 1–23 is disordered; the sequence is MDNTTNINTNERSSNTDFSSAPN. Residues 51–83 form the LisH domain; the sequence is SKQLLYAHIYNYLIKNNYWNSAAKFLSEADLPL. Disordered stretches follow at residues 191–220, 268–347, 413–439, and 572–660; these read TQNSFPVSEESFRPNGDGSNFNLNDPTNRN, LQSP…PTNQ, GNQNYQSNTRNNTAEETTPTNDNNANG, and KTNT…TKES. Over residues 207-220 the composition is skewed to polar residues; that stretch reads DGSNFNLNDPTNRN. A compositionally biased stretch (low complexity) spans 269 to 314; sequence QSPAQPQQSSQQQIQQPQRQPQHQQQQQQQQQQQQQQQQQQQQQQQ. Polar residues-rich tracts occupy residues 330 to 347, 421 to 439, and 572 to 585; these read SENSHSTGLMPSVPPTNQ, TRNNTAEETTPTNDNNANG, and KTNTSVPQNDSTSV. Over residues 590–643 the composition is skewed to low complexity; it reads NNNNNNNNNNNNNNNSNNSNNNNNNNNSNNTPTVSQPSSKRTSSSSTTPNITTT. The segment covering 646 to 655 has biased composition (basic residues); sequence PKRKQRVGKT.

It belongs to the MSS11 family. In terms of assembly, interacts with FLO8, STE12 and TEC1.

The protein localises to the cytoplasm. It localises to the nucleus. Functionally, transcription factor that regulates pseudohyphal differentiation, invasive growth, floculation, adhesion and starch metabolism in response to nutrient availability. In Saccharomyces cerevisiae (strain YJM789) (Baker's yeast), this protein is Transcription activator MSS11 (MSS11).